The primary structure comprises 415 residues: tRNA(Met) cytidine acetate ligase (415 aa).

Residues 7-20, G101, N162, and 187-188 each bind ATP; these read VVEY…HLYH and RI.

The protein belongs to the TmcAL family. Homodimer.

The protein resides in the cytoplasm. The catalysed reaction is cytidine(34) in elongator tRNA(Met) + acetate + ATP = N(4)-acetylcytidine(34) in elongator tRNA(Met) + AMP + diphosphate. Its function is as follows. Catalyzes the formation of N(4)-acetylcytidine (ac(4)C) at the wobble position of elongator tRNA(Met), using acetate and ATP as substrates. First activates an acetate ion to form acetyladenylate (Ac-AMP) and then transfers the acetyl group to tRNA to form ac(4)C34. The sequence is that of tRNA(Met) cytidine acetate ligase from Bacillus subtilis (strain 168).